Consider the following 117-residue polypeptide: MEKKTAYCLLFLVLLVPYTALGAVLKRAPAKKEKRAVPLAVPLVYWGASVSPAVWNWLLVTFGAAAVAAAAVTVSDNDSHSCANNRGWCRSRCFSHEYIDSWHSDVCGSYDCCRPRY.

A signal peptide spans 1–23 (MEKKTAYCLLFLVLLVPYTALGA). Residues 24–33 (VLKRAPAKKE) constitute a propeptide that is removed on maturation. 3 disulfides stabilise this stretch: Cys-82–Cys-112, Cys-89–Cys-107, and Cys-93–Cys-113.

This sequence belongs to the big defensin family.

It is found in the secreted. Its function is as follows. Significantly inhibits the growth of Gram-negative and Gram-positive bacteria and fungi in vitro. This chain is Big defensin, found in Branchiostoma belcheri (Amphioxus).